Here is a 767-residue protein sequence, read N- to C-terminus: Cullin-1 (767 aa).

The 62-residue stretch at 699–760 folds into the Cullin neddylation domain; that stretch reads DRKLLLQSAI…EKEYLERQGR (62 aa). Lys-713 is covalently cross-linked (Glycyl lysine isopeptide (Lys-Gly) (interchain with G-Cter in NEDD8)).

The protein belongs to the cullin family. Component of multiple Cul1-RING E3 ubiquitin-protein ligase complexes commonly known as SCF (SKP1-CUL1-F-box) complexes, consisting of cul1, skp1, pip1 and a variable F-box domain-containing protein as substrate-specific subunit. Binds to the pop1 homodimer, the pop2 homodimer and the pop1/pop2 heterodimer forming the SCF(pop1-pop2) complex. Interacts with pof3, pof14 and skp1. Post-translationally, neddylated; enhancing the ubiquitin-ligase activity.

It is found in the cytoplasm. Its pathway is protein modification; protein ubiquitination. In terms of biological role, core component of multiple cullin-RING-based SCF (SKP1-CUL1-F-box protein) E3 ubiquitin-protein ligase complexes, which mediate the ubiquitination of target proteins. The functional specificity of the SCF complex depends on the F-box protein as substrate recognition component. SCF(pop1-pop2) is required for the maintenance of ploidy and directs ubiquitination of cig2. The sequence is that of Cullin-1 (cul1) from Schizosaccharomyces pombe (strain 972 / ATCC 24843) (Fission yeast).